We begin with the raw amino-acid sequence, 205 residues long: Ephrin-A1 (205 aa).

The first 17 residues, Met1–Ala17, serve as a signal peptide directing secretion. One can recognise an Ephrin RBD domain in the interval Ala18–Pro161. Asn26 carries an N-linked (GlcNAc...) asparagine glycan. Intrachain disulfides connect Cys51-Cys92 and Cys80-Cys140. Residue Ser182 is the site of GPI-anchor amidated serine attachment. Positions Ala183–Gln205 are cleaved as a propeptide — removed in mature form.

The protein belongs to the ephrin family. In terms of assembly, monomer. Homodimer. Forms heterodimers with EPHA2. Binds to the receptor tyrosine kinases EPHA2, EPHA3, EPHA4, EPHA5, EPHA6 and EPHA7. Also binds with low affinity to EPHA1. In terms of processing, undergoes proteolysis by a metalloprotease to give rise to a soluble monomeric form. Post-translationally, N-Glycosylation is required for binding to EPHA2 receptor and inducing its internalization. In terms of tissue distribution, expressed in myogenic progenitor cells.

It is found in the cell membrane. The protein localises to the secreted. Its function is as follows. Cell surface GPI-bound ligand for Eph receptors, a family of receptor tyrosine kinases which are crucial for migration, repulsion and adhesion during neuronal, vascular and epithelial development. Binds promiscuously Eph receptors residing on adjacent cells, leading to contact-dependent bidirectional signaling into neighboring cells. Plays an important role in angiogenesis and tumor neovascularization. The recruitment of VAV2, VAV3 and PI3-kinase p85 subunit by phosphorylated EPHA2 is critical for EFNA1-induced RAC1 GTPase activation and vascular endothelial cell migration and assembly. Exerts anti-oncogenic effects in tumor cells through activation and down-regulation of EPHA2. Activates EPHA2 by inducing tyrosine phosphorylation which leads to its internalization and degradation. Acts as a negative regulator in the tumorigenesis of gliomas by down-regulating EPHA2 and FAK. Can evoke collapse of embryonic neuronal growth cone and regulates dendritic spine morphogenesis. This Mus musculus (Mouse) protein is Ephrin-A1 (Efna1).